We begin with the raw amino-acid sequence, 1461 residues long: Phospholipid-transporting ATPase VB (1461 aa).

Topologically, residues 1–82 are cytoplasmic; that stretch reads MALSVDSSWH…TTKYTLFTFL (82 aa). Residues 83-104 form a helical membrane-spanning segment; sequence PRNLFEQFHRWANLYFLFLVIL. At 105–110 the chain is on the exoplasmic loop side; the sequence is NWMPSM. Residues 111 to 132 form a helical membrane-spanning segment; it reads EVFHREITMLPLAIVLFVIMIK. Over 133–316 the chain is Cytoplasmic; that stretch reads DGMEDFKRHR…SKIERRMNID (184 aa). A helical transmembrane segment spans residues 317-338; sequence IFFCIGILILMCLIGAVGHSIW. Over 339–368 the chain is Exoplasmic loop; the sequence is NGTFEEHPPFDVPDANGSFLPSALGGFYMF. Residues 369 to 390 traverse the membrane as a helical segment; it reads LTMIILLQVLIPISLYVSIELV. Topologically, residues 391-1111 are cytoplasmic; it reads KLGQVFFLSN…GHWCYSRLAR (721 aa). Asp433 (4-aspartylphosphate intermediate) is an active-site residue. ATP-binding residues include Asp433, Lys434, and Thr435. Asp433 contacts Mg(2+). Position 435 (Thr435) interacts with Mg(2+). Polar residues-rich tracts occupy residues 496–511 and 530–539; these read MRSQKGAQPLRRSQSA and SQPPVAFSSS. 2 disordered regions span residues 496–541 and 640–687; these read MRSQ…SSIE and TAPS…MWDQ. ATP-binding residues include Glu724, Phe766, Lys790, Arg835, Thr915, Gly916, Asp917, Arg1029, and Lys1035. Asp1055 lines the Mg(2+) pocket. The ATP site is built by Asn1058 and Asp1059. Mg(2+) is bound at residue Asp1059. The chain crosses the membrane as a helical span at residues 1112 to 1132; that stretch reads MVVYYLYKNVCYVNLLFWYQF. The Exoplasmic loop segment spans residues 1133–1144; the sequence is FCGFSSSTMIDY. Residues 1145-1164 form a helical membrane-spanning segment; the sequence is WQMIFFNLFFTSLPPLVFGV. Over 1165–1194 the chain is Cytoplasmic; it reads LDKDISAETLLALPELYKSGQNSECYNLST. A helical transmembrane segment spans residues 1195–1216; the sequence is FWISMVDAFYQSLICFFIPYLA. Topologically, residues 1217–1223 are exoplasmic loop; sequence YKGSDID. A helical transmembrane segment spans residues 1224-1246; it reads VFTFGTPINTISLTTILLHQAME. The Cytoplasmic segment spans residues 1247-1252; the sequence is MKTWTI. A helical membrane pass occupies residues 1253–1273; the sequence is FHGVVLLGSFLMYFLVSLLYN. Over 1274 to 1291 the chain is Exoplasmic loop; the sequence is ATCVICNSPTNPYWVMEG. Residues 1292–1316 traverse the membrane as a helical segment; it reads QLSNPTFYLVCFLTPVVALLPRYFF. Residues 1317–1461 are Cytoplasmic-facing; sequence LSLQGTCGKS…HRRSQSSLTI (145 aa). The interval 1346–1397 is disordered; sequence IQSWRSRQRPAPVPEVARPTHHPVSSITGQDFSASTPKSSNPPKRKHVEESV. A compositionally biased stretch (polar residues) spans 1368–1387; that stretch reads PVSSITGQDFSASTPKSSNP.

Belongs to the cation transport ATPase (P-type) (TC 3.A.3) family. Type IV subfamily. In terms of assembly, component of a P4-ATPase flippase complex which consists of a catalytic alpha subunit ATP10B and an accessory beta subunit TMEM30A. Mg(2+) is required as a cofactor. Autophosphorylated at the conserved aspartate of the P-type ATPase signature sequence. As to expression, expressed in predominantly in brain structures including medulla oblongata, substantia nigra and basal ganglia. Expressed in the gastrointestinal system with highest levels in the small intestine and colon. Also expressed at low levels in testis and thymus.

The protein localises to the late endosome membrane. The protein resides in the lysosome membrane. Its subcellular location is the endoplasmic reticulum membrane. The catalysed reaction is ATP + H2O + phospholipidSide 1 = ADP + phosphate + phospholipidSide 2.. The enzyme catalyses a beta-D-glucosyl-(1&lt;-&gt;1')-N-acylsphing-4-enine(out) + ATP + H2O = a beta-D-glucosyl-(1&lt;-&gt;1')-N-acylsphing-4-enine(in) + ADP + phosphate + H(+). Catalytic component of a P4-ATPase flippase complex, which catalyzes the hydrolysis of ATP coupled to the transport of glucosylceramide (GlcCer) from the outer to the inner leaflet of lysosome membranes. Plays an important role in the maintenance of lysosome membrane integrity and function in cortical neurons. This is Phospholipid-transporting ATPase VB from Homo sapiens (Human).